A 258-amino-acid polypeptide reads, in one-letter code: D-beta-hydroxybutyrate dehydrogenase (258 aa).

Position 6–30 (6–30 (VITGSTSGIGLAIARTLAKAGANIV)) interacts with NAD(+). Position 140 (Ser-140) interacts with substrate. Tyr-153 functions as the Proton acceptor in the catalytic mechanism.

The protein belongs to the short-chain dehydrogenases/reductases (SDR) family.

It catalyses the reaction (R)-3-hydroxybutanoate + NAD(+) = acetoacetate + NADH + H(+). This is D-beta-hydroxybutyrate dehydrogenase (bdhA) from Rhizobium meliloti (strain 1021) (Ensifer meliloti).